A 753-amino-acid polypeptide reads, in one-letter code: Oligopeptide transporter 5 (753 aa).

Transmembrane regions (helical) follow at residues 56–76 (TWFLGMVSCVVLAFVNNFFGY), 80–100 (PLTVSSVVAQIITLPLGKLMA), 132–152 (ITIFANTGAGGAYATSILTIV), 163–183 (AAAMLLVQTTQLLGYGWAGMF), 224–244 (FFLIVFFLSFTYYIVPGYLFP), 296–316 (FFAIANSFGGFIIFFYIILPI), 368–388 (YLSILFALIYGLSFGTLTATI), 432–452 (WWFVAVLAASFVLALYACEGF), 461–481 (WGLLLACAIAFTFTLPIGVIL), 506–528 (PLANVAFKTYGSVSIAQALYFVG), 544–564 (FIVQLVATIVASTVSFGTTWW), 583–603 (PWTCPGDVVFYNASIIWGIIG), 615–635 (PGMNWFFLIGFLAPVPVWFFA), 662–682 (AKAVHYWSWFAVGIVFNYYIF), and 695–715 (ILSAALDAGTAVMGVLIYFAL).

This sequence belongs to the oligopeptide OPT transporter (TC 2.A.67.1) family. Expressed predominantly in flowers, and at a very low level in leaves and roots.

The protein localises to the membrane. Involved in the translocation of tetra- and pentapeptides across the cellular membrane in an energy-dependent manner. The protein is Oligopeptide transporter 5 (OPT5) of Arabidopsis thaliana (Mouse-ear cress).